A 410-amino-acid polypeptide reads, in one-letter code: Diguanylate cyclase DgcM (410 aa).

2 PAS domains span residues 3-70 (THNF…NQHD) and 129-198 (GFYA…HLPG). A PAC domain is found at 199 to 251 (GHKPLNFIHKLADGSTRHVQTYAGPIEIYGDKLMLCIVHDITEQKRLEEQLEH). Residues 283-410 (QDYSLLLIDT…NDGRNRVLAA (128 aa)) form the GGDEF domain. Position 291 (Asp291) interacts with Mg(2+). 3 residues coordinate substrate: Asn299, His304, and Asp308. Glu334 contacts Mg(2+). Glu334 (proton acceptor) is an active-site residue.

Mg(2+) serves as cofactor.

The catalysed reaction is 2 GTP = 3',3'-c-di-GMP + 2 diphosphate. It functions in the pathway purine metabolism; 3',5'-cyclic di-GMP biosynthesis. Part of a signaling cascade that regulates curli biosynthesis. The cascade is composed of two cyclic-di-GMP (c-di-GMP) control modules, in which c-di-GMP controlled by the DgcE/PdeH pair (module I) regulates the activity of the DgcM/PdeR pair (module II), which in turn regulates activity of the transcription factor MlrA and expression of the master biofilm regulator csgD. The chain is Diguanylate cyclase DgcM from Escherichia coli O157:H7.